The chain runs to 334 residues: Iron-uptake system permease protein FeuB (334 aa).

The next 9 membrane-spanning stretches (helical) occupy residues 9 to 29, 63 to 83, 91 to 111, 119 to 139, 150 to 170, 191 to 211, 243 to 263, 281 to 301, and 305 to 325; these read IILITSPFAIALSLLLSILYG, AAGALLIGAALAVSGALMQGI, PSIMGVSDGSAFIITLCMVLL, MMIYSFIGSALGAVLVFGLAA, LAIIGTVTSMLLSSLSAAMSI, PDFLKLAAPFFLIGIIMAISL, VIILTGSAVALAGKIAFVGLV, PCSCILGGIFLTLCDLASRFI, and FETPIEVVTSIIGVPFFLYLI.

Belongs to the binding-protein-dependent transport system permease family. FecCD subfamily. The complex is composed of one ATP-binding protein (YusV), two transmembrane proteins (FeuB and FeuC) and a solute-binding protein (FeuA).

It is found in the cell membrane. Its subcellular location is the membrane raft. Involved in the uptake of iron. Probably responsible for the translocation of the substrate across the membrane. In terms of biological role, part of the ABC transporter complex FeuABC/YusV involved in import of the catecholate siderophores bacillibactin and enterobactin. The sequence is that of Iron-uptake system permease protein FeuB (feuB) from Bacillus subtilis (strain 168).